Consider the following 241-residue polypeptide: 3-oxoacyl-[acyl-carrier-protein] reductase FabG (241 aa).

Residues 13–16, S38, 57–58, and N83 each bind NADP(+); these read GASG and EI. S135 contacts substrate. The active-site Proton acceptor is the Y148. NADP(+)-binding positions include 148 to 152 and I181; that span reads YCASK.

It belongs to the short-chain dehydrogenases/reductases (SDR) family. Homotetramer.

It carries out the reaction a (3R)-hydroxyacyl-[ACP] + NADP(+) = a 3-oxoacyl-[ACP] + NADPH + H(+). The protein operates within lipid metabolism; fatty acid biosynthesis. Functionally, catalyzes the NADPH-dependent reduction of beta-ketoacyl-ACP substrates to beta-hydroxyacyl-ACP products, the first reductive step in the elongation cycle of fatty acid biosynthesis. This chain is 3-oxoacyl-[acyl-carrier-protein] reductase FabG (fabG), found in Rickettsia felis (strain ATCC VR-1525 / URRWXCal2) (Rickettsia azadi).